The following is a 95-amino-acid chain: Microcin E492 immunity protein (95 aa).

A run of 3 helical transmembrane segments spans residues 1–21 (MTLL…FCII), 35–55 (VIVL…TKVY), and 67–87 (YLFC…ILTI).

Belongs to the MceB microcin immunity protein family.

The protein resides in the cell inner membrane. Protect the producing cell against microcin E492. The chain is Microcin E492 immunity protein from Klebsiella pneumoniae.